The sequence spans 561 residues: Dihydroxy-acid dehydratase (561 aa).

Residue aspartate 80 coordinates Mg(2+). Cysteine 121 contributes to the [2Fe-2S] cluster binding site. The Mg(2+) site is built by aspartate 122 and lysine 123. Lysine 123 carries the post-translational modification N6-carboxylysine. Residue cysteine 194 coordinates [2Fe-2S] cluster. A Mg(2+)-binding site is contributed by glutamate 448. Residue serine 474 is the Proton acceptor of the active site.

This sequence belongs to the IlvD/Edd family. As to quaternary structure, homodimer. The cofactor is [2Fe-2S] cluster. Mg(2+) serves as cofactor.

The enzyme catalyses (2R)-2,3-dihydroxy-3-methylbutanoate = 3-methyl-2-oxobutanoate + H2O. The catalysed reaction is (2R,3R)-2,3-dihydroxy-3-methylpentanoate = (S)-3-methyl-2-oxopentanoate + H2O. It functions in the pathway amino-acid biosynthesis; L-isoleucine biosynthesis; L-isoleucine from 2-oxobutanoate: step 3/4. The protein operates within amino-acid biosynthesis; L-valine biosynthesis; L-valine from pyruvate: step 3/4. Its function is as follows. Functions in the biosynthesis of branched-chain amino acids. Catalyzes the dehydration of (2R,3R)-2,3-dihydroxy-3-methylpentanoate (2,3-dihydroxy-3-methylvalerate) into 2-oxo-3-methylpentanoate (2-oxo-3-methylvalerate) and of (2R)-2,3-dihydroxy-3-methylbutanoate (2,3-dihydroxyisovalerate) into 2-oxo-3-methylbutanoate (2-oxoisovalerate), the penultimate precursor to L-isoleucine and L-valine, respectively. This is Dihydroxy-acid dehydratase from Anaeromyxobacter sp. (strain Fw109-5).